A 338-amino-acid polypeptide reads, in one-letter code: D-erythrose-4-phosphate dehydrogenase (338 aa).

12–13 (RI) lines the NAD(+) pocket. Residues 154–156 (SCT), Arg200, 213–214 (TK), and Arg236 contribute to the substrate site. The active-site Nucleophile is Cys155. Asn318 serves as a coordination point for NAD(+).

Belongs to the glyceraldehyde-3-phosphate dehydrogenase family. Epd subfamily. Homotetramer.

Its subcellular location is the cytoplasm. The catalysed reaction is D-erythrose 4-phosphate + NAD(+) + H2O = 4-phospho-D-erythronate + NADH + 2 H(+). It functions in the pathway cofactor biosynthesis; pyridoxine 5'-phosphate biosynthesis; pyridoxine 5'-phosphate from D-erythrose 4-phosphate: step 1/5. Functionally, catalyzes the NAD-dependent conversion of D-erythrose 4-phosphate to 4-phosphoerythronate. This is D-erythrose-4-phosphate dehydrogenase from Pectobacterium carotovorum subsp. carotovorum (strain PC1).